Reading from the N-terminus, the 209-residue chain is MWLSPALLLLSFPGCLSIQGPALVRGPEQGSVTVQCRYSSRWQTNKKWWCRGASWSTCRVLIRSTGSEKETKSGRLSIRDNQKNHSFQVTMEMLRQNDTDTYWCGIEKFGTDRGTRVKVNVYSVGKDTMSTSNQLPWPTVDGSTDMVSSDLQKRTYYMLLVFVKVPALLILVGAVLWLKRSTQKVPEEQWRHTLCSDLDSELLAKDISP.

The signal sequence occupies residues 1–17; the sequence is MWLSPALLLLSFPGCLS. One can recognise an Ig-like V-type domain in the interval 18-120; the sequence is IQGPALVRGP…TDRGTRVKVN (103 aa). Residues 18–157 lie on the Extracellular side of the membrane; the sequence is IQGPALVRGP…SSDLQKRTYY (140 aa). A disulfide bond links Cys36 and Cys104. The N-linked (GlcNAc...) asparagine glycan is linked to Asn97. A helical transmembrane segment spans residues 158–178; the sequence is MLLVFVKVPALLILVGAVLWL. Residues 179 to 209 are Cytoplasmic-facing; that stretch reads KRSTQKVPEEQWRHTLCSDLDSELLAKDISP. Ser196 carries the phosphoserine modification.

It belongs to the CD300 family. As to quaternary structure, interacts with TYROBP, which enhances cell surface expression and activation properties. May interact with HCST. N-glycosylated. In terms of tissue distribution, expressed in myeloid cells (at protein level).

Its subcellular location is the cell membrane. In terms of biological role, acts as an activating immune receptor in mast cells through its interaction with ITAM-bearing adapter TYROBP. The sequence is that of CMRF35-like molecule 7 (Cd300lb) from Mus musculus (Mouse).